Here is a 189-residue protein sequence, read N- to C-terminus: Peptidyl-tRNA hydrolase (189 aa).

Tyrosine 14 provides a ligand contact to tRNA. Histidine 19 acts as the Proton acceptor in catalysis. TRNA-binding residues include tyrosine 64, asparagine 66, and asparagine 112.

Belongs to the PTH family. Monomer.

It is found in the cytoplasm. The catalysed reaction is an N-acyl-L-alpha-aminoacyl-tRNA + H2O = an N-acyl-L-amino acid + a tRNA + H(+). Its function is as follows. Hydrolyzes ribosome-free peptidyl-tRNAs (with 1 or more amino acids incorporated), which drop off the ribosome during protein synthesis, or as a result of ribosome stalling. In terms of biological role, catalyzes the release of premature peptidyl moieties from peptidyl-tRNA molecules trapped in stalled 50S ribosomal subunits, and thus maintains levels of free tRNAs and 50S ribosomes. The chain is Peptidyl-tRNA hydrolase from Dehalococcoides mccartyi (strain ATCC BAA-2100 / JCM 16839 / KCTC 5957 / BAV1).